Reading from the N-terminus, the 495-residue chain is Chromosomal replication initiator protein DnaA (495 aa).

The interval 1-83 (MSVALWQQCL…KVQLTVGSRR (83 aa)) is domain I, interacts with DnaA modulators. Positions 83–158 (RNVAMSSPRD…QVEGSLKHQS (76 aa)) are domain II. Residues 86 to 127 (AMSSPRDLGAPVSATTMNASRPTEAPAVHAAPRAKGDYADEQ) form a disordered region. The tract at residues 159–375 (GLNPNFTFET…GALKKVIADS (217 aa)) is domain III, AAA+ region. ATP-binding residues include glycine 203, glycine 205, lysine 206, and threonine 207. The segment at 376–495 (HFMGKPITQD…YKNLLRLLTS (120 aa)) is domain IV, binds dsDNA.

It belongs to the DnaA family. In terms of assembly, oligomerizes as a right-handed, spiral filament on DNA at oriC.

The protein resides in the cytoplasm. Its function is as follows. Plays an essential role in the initiation and regulation of chromosomal replication. ATP-DnaA binds to the origin of replication (oriC) to initiate formation of the DNA replication initiation complex once per cell cycle. Binds the DnaA box (a 9 base pair repeat at the origin) and separates the double-stranded (ds)DNA. Forms a right-handed helical filament on oriC DNA; dsDNA binds to the exterior of the filament while single-stranded (ss)DNA is stabiized in the filament's interior. The ATP-DnaA-oriC complex binds and stabilizes one strand of the AT-rich DNA unwinding element (DUE), permitting loading of DNA polymerase. After initiation quickly degrades to an ADP-DnaA complex that is not apt for DNA replication. Binds acidic phospholipids. This is Chromosomal replication initiator protein DnaA from Chromohalobacter salexigens (strain ATCC BAA-138 / DSM 3043 / CIP 106854 / NCIMB 13768 / 1H11).